A 211-amino-acid chain; its full sequence is Dual specificity protein phosphatase 26 (211 aa).

Positions 60 to 207 constitute a Tyrosine-protein phosphatase domain; the sequence is NHADEVWPGL…LLALDRRLRQ (148 aa). Cysteine 152 acts as the Phosphocysteine intermediate in catalysis.

Belongs to the protein-tyrosine phosphatase family. Non-receptor class dual specificity subfamily. Interacts with HSF4. In terms of tissue distribution, brain and skeletal muscle. In the brain it is expressed ubiquitously except in the hippocampus.

The protein resides in the cytoplasm. It localises to the nucleus. It is found in the golgi apparatus. It catalyses the reaction O-phospho-L-tyrosyl-[protein] + H2O = L-tyrosyl-[protein] + phosphate. The enzyme catalyses O-phospho-L-seryl-[protein] + H2O = L-seryl-[protein] + phosphate. The catalysed reaction is O-phospho-L-threonyl-[protein] + H2O = L-threonyl-[protein] + phosphate. Inactivates MAPK1 and MAPK3 which leads to dephosphorylation of heat shock factor protein 4 and a reduction in its DNA-binding activity. The chain is Dual specificity protein phosphatase 26 (Dusp26) from Mus musculus (Mouse).